Consider the following 423-residue polypeptide: Phosphoribosylamine--glycine ligase (423 aa).

The region spanning 107 to 312 is the ATP-grasp domain; it reads KDLCARYDIP…LLPILYATAT (206 aa). 133–193 contributes to the ATP binding site; sequence VRAQGAPIVI…EAFLDGEEAS (61 aa). Glutamate 282 and asparagine 284 together coordinate Mg(2+).

It belongs to the GARS family. It depends on Mg(2+) as a cofactor. Mn(2+) is required as a cofactor.

The catalysed reaction is 5-phospho-beta-D-ribosylamine + glycine + ATP = N(1)-(5-phospho-beta-D-ribosyl)glycinamide + ADP + phosphate + H(+). It participates in purine metabolism; IMP biosynthesis via de novo pathway; N(1)-(5-phospho-D-ribosyl)glycinamide from 5-phospho-alpha-D-ribose 1-diphosphate: step 2/2. The sequence is that of Phosphoribosylamine--glycine ligase from Agrobacterium fabrum (strain C58 / ATCC 33970) (Agrobacterium tumefaciens (strain C58)).